The following is a 426-amino-acid chain: Glutamate-1-semialdehyde 2,1-aminomutase (426 aa).

N6-(pyridoxal phosphate)lysine is present on lysine 265.

The protein belongs to the class-III pyridoxal-phosphate-dependent aminotransferase family. HemL subfamily. In terms of assembly, homodimer. The cofactor is pyridoxal 5'-phosphate.

The protein resides in the cytoplasm. It catalyses the reaction (S)-4-amino-5-oxopentanoate = 5-aminolevulinate. It participates in porphyrin-containing compound metabolism; protoporphyrin-IX biosynthesis; 5-aminolevulinate from L-glutamyl-tRNA(Glu): step 2/2. In Actinobacillus pleuropneumoniae serotype 7 (strain AP76), this protein is Glutamate-1-semialdehyde 2,1-aminomutase.